Here is a 114-residue protein sequence, read N- to C-terminus: Large ribosomal subunit protein uL22 (114 aa).

The protein belongs to the universal ribosomal protein uL22 family. Part of the 50S ribosomal subunit.

Functionally, this protein binds specifically to 23S rRNA; its binding is stimulated by other ribosomal proteins, e.g. L4, L17, and L20. It is important during the early stages of 50S assembly. It makes multiple contacts with different domains of the 23S rRNA in the assembled 50S subunit and ribosome. The globular domain of the protein is located near the polypeptide exit tunnel on the outside of the subunit, while an extended beta-hairpin is found that lines the wall of the exit tunnel in the center of the 70S ribosome. The chain is Large ribosomal subunit protein uL22 from Alcanivorax borkumensis (strain ATCC 700651 / DSM 11573 / NCIMB 13689 / SK2).